Here is a 446-residue protein sequence, read N- to C-terminus: Na(+)-translocating NADH-quinone reductase subunit A (446 aa).

Belongs to the NqrA family. As to quaternary structure, composed of six subunits; NqrA, NqrB, NqrC, NqrD, NqrE and NqrF.

The catalysed reaction is a ubiquinone + n Na(+)(in) + NADH + H(+) = a ubiquinol + n Na(+)(out) + NAD(+). In terms of biological role, NQR complex catalyzes the reduction of ubiquinone-1 to ubiquinol by two successive reactions, coupled with the transport of Na(+) ions from the cytoplasm to the periplasm. NqrA to NqrE are probably involved in the second step, the conversion of ubisemiquinone to ubiquinol. This is Na(+)-translocating NADH-quinone reductase subunit A from Vibrio cholerae serotype O1 (strain ATCC 39541 / Classical Ogawa 395 / O395).